Consider the following 148-residue polypeptide: Succinate dehydrogenase assembly factor 3, mitochondrial (148 aa).

A mitochondrion-targeting transit peptide spans methionine 1–alanine 12. The interval arginine 129 to glutamine 148 is disordered.

Belongs to the complex I LYR family. SDHAF3 subfamily. Interacts with the iron-sulfur protein subunit within the SDH catalytic dimer.

It localises to the mitochondrion matrix. Its function is as follows. Plays an essential role in the assembly of succinate dehydrogenase (SDH), an enzyme complex (also referred to as respiratory complex II) that is a component of both the tricarboxylic acid (TCA) cycle and the mitochondrial electron transport chain, and which couples the oxidation of succinate to fumarate with the reduction of ubiquinone (coenzyme Q) to ubiquinol. Promotes maturation of the iron-sulfur protein subunit of the SDH catalytic dimer, protecting it from the deleterious effects of oxidants. May act together with SDHAF1. In Neurospora crassa (strain ATCC 24698 / 74-OR23-1A / CBS 708.71 / DSM 1257 / FGSC 987), this protein is Succinate dehydrogenase assembly factor 3, mitochondrial.